The primary structure comprises 294 residues: N-acetylmuramic acid 6-phosphate etherase (294 aa).

The 164-residue stretch at 54-217 folds into the SIS domain; the sequence is VIKSFEEEGR…STASMIGVGK (164 aa). Residue Glu82 is the Proton donor of the active site. Glu113 is an active-site residue.

This sequence belongs to the GCKR-like family. MurNAc-6-P etherase subfamily. In terms of assembly, homodimer.

It catalyses the reaction N-acetyl-D-muramate 6-phosphate + H2O = N-acetyl-D-glucosamine 6-phosphate + (R)-lactate. It functions in the pathway amino-sugar metabolism; N-acetylmuramate degradation. Its function is as follows. Specifically catalyzes the cleavage of the D-lactyl ether substituent of MurNAc 6-phosphate, producing GlcNAc 6-phosphate and D-lactate. This chain is N-acetylmuramic acid 6-phosphate etherase, found in Bacillus cereus (strain G9842).